The chain runs to 29 residues: Cyclotide mra2 (29 aa).

Disulfide bonds link Cys-4/Cys-19, Cys-8/Cys-21, and Cys-13/Cys-26.

Post-translationally, this is a cyclic peptide. In terms of processing, contains 3 disulfide bonds.

Functionally, probably participates in a plant defense mechanism. This chain is Cyclotide mra2, found in Melicytus ramiflorus (Whitey wood).